The chain runs to 106 residues: Thioredoxin-like protein YusE (106 aa).

One can recognise a Thioredoxin domain in the interval 1-101 (MKELQEHELD…LYELIKQKSS (101 aa)). Cys26 and Cys29 are disulfide-bonded.

In Bacillus subtilis (strain 168), this protein is Thioredoxin-like protein YusE (yusE).